A 555-amino-acid polypeptide reads, in one-letter code: Beta-caryophyllene synthase (555 aa).

The Mg(2+) site is built by Asp313, Asp317, Asp456, and Glu464. The DDXXD motif signature appears at 313 to 317; the sequence is DDIYD.

The protein belongs to the terpene synthase family. Mg(2+) serves as cofactor.

The enzyme catalyses (2E,6E)-farnesyl diphosphate = (+)-(E)-beta-caryophyllene + diphosphate. The protein operates within secondary metabolite biosynthesis; terpenoid biosynthesis. Its function is as follows. Sesquiterpene synthase converting farnesyl diphosphate to beta-caryophyllene as the major product. In Phyla dulcis (Aztec sweet herb), this protein is Beta-caryophyllene synthase.